The sequence spans 203 residues: Small ribosomal subunit protein uS4 (203 aa).

The region spanning 93–156 (RRLDNVVYRL…MKVPAILEAV (64 aa)) is the S4 RNA-binding domain.

It belongs to the universal ribosomal protein uS4 family. As to quaternary structure, part of the 30S ribosomal subunit. Contacts protein S5. The interaction surface between S4 and S5 is involved in control of translational fidelity.

Functionally, one of the primary rRNA binding proteins, it binds directly to 16S rRNA where it nucleates assembly of the body of the 30S subunit. With S5 and S12 plays an important role in translational accuracy. In Streptococcus pyogenes serotype M49 (strain NZ131), this protein is Small ribosomal subunit protein uS4.